Reading from the N-terminus, the 274-residue chain is Putative phosphoenolpyruvate synthase regulatory protein (274 aa).

155 to 162 (GVSRSGKT) contacts ADP.

It belongs to the pyruvate, phosphate/water dikinase regulatory protein family. PSRP subfamily.

The enzyme catalyses [pyruvate, water dikinase] + ADP = [pyruvate, water dikinase]-phosphate + AMP + H(+). It carries out the reaction [pyruvate, water dikinase]-phosphate + phosphate + H(+) = [pyruvate, water dikinase] + diphosphate. Its function is as follows. Bifunctional serine/threonine kinase and phosphorylase involved in the regulation of the phosphoenolpyruvate synthase (PEPS) by catalyzing its phosphorylation/dephosphorylation. The polypeptide is Putative phosphoenolpyruvate synthase regulatory protein (Laribacter hongkongensis (strain HLHK9)).